We begin with the raw amino-acid sequence, 88 residues long: UPF0298 protein BA_4142/GBAA_4142/BAS3844 (88 aa).

Belongs to the UPF0298 family.

It is found in the cytoplasm. This Bacillus anthracis protein is UPF0298 protein BA_4142/GBAA_4142/BAS3844.